Reading from the N-terminus, the 167-residue chain is Peptide deformylase (167 aa).

Fe cation-binding residues include Cys91 and His133. The active site involves Glu134. His137 serves as a coordination point for Fe cation.

This sequence belongs to the polypeptide deformylase family. Fe(2+) serves as cofactor.

The enzyme catalyses N-terminal N-formyl-L-methionyl-[peptide] + H2O = N-terminal L-methionyl-[peptide] + formate. Its function is as follows. Removes the formyl group from the N-terminal Met of newly synthesized proteins. Requires at least a dipeptide for an efficient rate of reaction. N-terminal L-methionine is a prerequisite for activity but the enzyme has broad specificity at other positions. The polypeptide is Peptide deformylase (Neisseria gonorrhoeae (strain ATCC 700825 / FA 1090)).